The primary structure comprises 511 residues: Probable Xaa-Pro aminopeptidase MAA_08947 (511 aa).

Mn(2+) is bound by residues Asp-275, Asp-286, Glu-439, and Glu-480.

It belongs to the peptidase M24B family. Mn(2+) serves as cofactor.

It carries out the reaction Release of any N-terminal amino acid, including proline, that is linked to proline, even from a dipeptide or tripeptide.. In terms of biological role, catalyzes the removal of a penultimate prolyl residue from the N-termini of peptides. In Metarhizium robertsii (strain ARSEF 23 / ATCC MYA-3075) (Metarhizium anisopliae (strain ARSEF 23)), this protein is Probable Xaa-Pro aminopeptidase MAA_08947.